A 236-amino-acid polypeptide reads, in one-letter code: Small ribosomal subunit protein uS2c (236 aa).

Belongs to the universal ribosomal protein uS2 family.

The protein localises to the plastid. Its subcellular location is the chloroplast. The chain is Small ribosomal subunit protein uS2c (rps2) from Pisum sativum (Garden pea).